A 200-amino-acid chain; its full sequence is Large ribosomal subunit protein uL4 (200 aa).

The disordered stretch occupies residues glycine 38–alanine 67.

The protein belongs to the universal ribosomal protein uL4 family. As to quaternary structure, part of the 50S ribosomal subunit.

Its function is as follows. One of the primary rRNA binding proteins, this protein initially binds near the 5'-end of the 23S rRNA. It is important during the early stages of 50S assembly. It makes multiple contacts with different domains of the 23S rRNA in the assembled 50S subunit and ribosome. Functionally, forms part of the polypeptide exit tunnel. This is Large ribosomal subunit protein uL4 from Pseudomonas paraeruginosa (strain DSM 24068 / PA7) (Pseudomonas aeruginosa (strain PA7)).